A 37-amino-acid chain; its full sequence is Large ribosomal subunit protein bL36 (37 aa).

This sequence belongs to the bacterial ribosomal protein bL36 family.

This chain is Large ribosomal subunit protein bL36, found in Bacillus anthracis (strain A0248).